We begin with the raw amino-acid sequence, 87 residues long: Small ribosomal subunit protein bS20 (87 aa).

Positions 1-29 (MANTAQARKRARQAVKQNAHNSSQRSTLR) are disordered. The span at 20 to 29 (HNSSQRSTLR) shows a compositional bias: polar residues.

The protein belongs to the bacterial ribosomal protein bS20 family.

In terms of biological role, binds directly to 16S ribosomal RNA. This Janthinobacterium sp. (strain Marseille) (Minibacterium massiliensis) protein is Small ribosomal subunit protein bS20.